Consider the following 681-residue polypeptide: Sodium-dependent phosphate transporter 1 (681 aa).

A run of 6 helical transmembrane segments spans residues Tyr25–Ala45, Ala66–Ser86, Leu106–Phe126, Ile162–Phe182, Ala207–Phe227, and Gly234–Val254. Residues Ser269 and Ser273 each carry the phosphoserine modification. Residues Ser269–Ile296 are disordered. Residues Leu275–Lys290 are compositionally biased toward basic and acidic residues. 4 helical membrane-spanning segments follow: residues Val515–Gly535, Val562–Val582, Phe604–Ile624, and Ile654–Ala674. Residues Asp554–Val562 are a.

The protein belongs to the inorganic phosphate transporter (PiT) (TC 2.A.20) family.

It is found in the cell membrane. The enzyme catalyses 2 Na(+)(out) + phosphate(out) = 2 Na(+)(in) + phosphate(in). In terms of biological role, sodium-phosphate symporter which preferentially transports the monovalent form of phosphate with a stoichiometry of two sodium ions per phosphate ion. May play a role in extracellular matrix and cartilage calcification as well as in vascular calcification. Essential for cell proliferation but this function is independent of its phosphate transporter activity. The polypeptide is Sodium-dependent phosphate transporter 1 (Slc20a1) (Felis catus (Cat)).